Reading from the N-terminus, the 813-residue chain is Tax1-binding protein 1 homolog (813 aa).

3 positions are modified to phosphoserine: Ser-124, Ser-138, and Ser-225. Positions 144–596 form a coiled coil; sequence TTKAGLLELK…SYSLQLAEKD (453 aa). The interval 320 to 420 is oligomerization; that stretch reads EEIGKLQSCL…ELQLHAVKTD (101 aa). Position 618 is a phosphoserine; by IKKA (Ser-618). Ser-631 is subject to Phosphoserine. A disordered region spans residues 667–732; it reads AHETRDGADG…NVPIPPDPAN (66 aa). At Ser-692 the chain carries Phosphoserine; by IKKA. 2 UBZ1-type zinc fingers span residues 751–777 and 778–804; these read HKKC…VESH and WKVC…VQTH. Residues Cys-754, Cys-757, His-773, His-777, Cys-781, Cys-784, His-800, and His-804 each coordinate Zn(2+).

As to quaternary structure, homooligomer. Interacts with TNFAIP3. Interacts with STARD13. Interacts with MYO6. Interacts with TOM1; the interaction is indirect and is mediated by MYO6, which acts as a bridge between TOM1 and TAX1BP1. Interacts with MAVS; this interaction induces MAVS polyubiquitination. Interacts with TNIP1. Interacts with TRAF6; this interaction mediates deubiquitination of TRAF6 and inhibition of NF-kappa-B activation. Interacts with RIPK1; this interaction negatively regulates RIPK1 ubiquitination. Interacts with NBR1. Interacts with TBK1. Interacts with RB1CC1. Interacts with SQSTM1. Interacts with AZI2. Interacts with TICAM1 and TRIM32; these interactions target TICAM1 to TAX1BP1-mediated selective autophagic degradation. Post-translationally, phosphorylated in the C-terminal region by CHUK/IKKA leading to NF-kappa-B signaling down-regulation.

The protein resides in the cytoplasm. The protein localises to the mitochondrion. It is found in the preautophagosomal structure. Its subcellular location is the cytoplasmic vesicle. It localises to the autophagosome. Ubiquitin-binding adapter that participates in inflammatory, antiviral and innate immune processes as well as selective autophagy regulation. Plays a key role in the negative regulation of NF-kappa-B and IRF3 signalings by acting as an adapter for the ubiquitin-editing enzyme A20/TNFAIP3 to bind and inactivate its substrates. Disrupts the interactions between the E3 ubiquitin ligase TRAF3 and TBK1/IKBKE to attenuate 'Lys63'-linked polyubiquitination of TBK1 and thereby IFN-beta production. Also recruits A20/TNFAIP3 to ubiquitinated signaling proteins TRAF6 and RIPK1, leading to their deubiquitination and disruption of IL-1 and TNF-induced NF-kappa-B signaling pathways. Inhibits virus-induced apoptosis by inducing the 'Lys-48'-linked polyubiquitination and degradation of MAVS via recruitment of the E3 ligase ITCH, thereby attenuating MAVS-mediated apoptosis signaling. As a macroautophagy/autophagy receptor, facilitates the xenophagic clearance of pathogenic bacteria such as Salmonella typhimurium and Mycobacterium tuberculosis. Upon NBR1 recruitment to the SQSTM1-ubiquitin condensates, acts as the major recruiter of RB1CC1 to these ubiquitin condensates to promote their autophagic degradation. Mediates the autophagic degradation of other substrates including TICAM1. The chain is Tax1-binding protein 1 homolog (Tax1bp1) from Rattus norvegicus (Rat).